A 691-amino-acid polypeptide reads, in one-letter code: MTRKFPLEQTRNIGIMAHIDAGKTTTTERILFYTGRVHKLGETHDGASTMDFMDQEQERGITITSAATTCQWRDTRVNIIDTPGHVDFTVEVERSLRVLDGAIGVFCAKGGVEPQSETVWHQADRYHVPRIAYINKMDIMGADFYNVVDMMNERLQANPVPIQLPIGKEDDFQGIVDLIKNTAVIYKDDLGTEWEEVEIPEDMQELAEEYRDKMLEMAAEYDEELMMKYLEGEEITSEEIRLALREGCLKTELTPVLCGSSYKNKGVQMLLNAVIDYLPAPTDVPPIEGVVPGKEDEEEKEQRVSSDDEPFSALAFKIVTDPYVGKLCFFRVYSGKIEAGSYVYNPVKGKKERVGRILQMHANHREERNVVYTGDIAAAVGLKNTSTGETLCSPEKPIVLESMQFPEPVISVAIEPKTRADQEKMATSLQKLSEEDPTFQTHTDDETGQTIIKGMGELHLEVIVDRLLREFKVEANVGKPQVAYKETIKAPTKSEGKFIRQSGGRGQYGHVLIEMEPLERGAGYEFEDKIVGGVIPKEYIPAVDNGIQEAMQNGVLAGYPMVDVKITLYDGSYHEVDSNESAFKIAGSMAFKDGSKKASPVILEPIMKVEIVVPEEYMGDVMGDVNSRRGRIEGMEERSGSRLIRSYVPLAEMFGYATQLRSTTQGRGTYTMEFSHYDEVPDSIAKELMDV.

Residues 8–282 (EQTRNIGIMA…AVIDYLPAPT (275 aa)) enclose the tr-type G domain. GTP is bound by residues 17–24 (AHIDAGKT), 81–85 (DTPGH), and 135–138 (NKMD).

This sequence belongs to the TRAFAC class translation factor GTPase superfamily. Classic translation factor GTPase family. EF-G/EF-2 subfamily.

Its subcellular location is the cytoplasm. In terms of biological role, catalyzes the GTP-dependent ribosomal translocation step during translation elongation. During this step, the ribosome changes from the pre-translocational (PRE) to the post-translocational (POST) state as the newly formed A-site-bound peptidyl-tRNA and P-site-bound deacylated tRNA move to the P and E sites, respectively. Catalyzes the coordinated movement of the two tRNA molecules, the mRNA and conformational changes in the ribosome. This chain is Elongation factor G, found in Natranaerobius thermophilus (strain ATCC BAA-1301 / DSM 18059 / JW/NM-WN-LF).